The following is a 431-amino-acid chain: Inactive polypeptide N-acetylgalactosaminyltransferase-like protein 5 (431 aa).

Residues methionine 1–valine 4 are Cytoplasmic-facing. Residues isoleucine 5–leucine 27 form a helical; Signal-anchor for type II membrane protein membrane-spanning segment. At histidine 28–phenylalanine 431 the chain is on the lumenal side. N-linked (GlcNAc...) asparagine glycosylation occurs at asparagine 68. 2 disulfide bridges follow: cysteine 105–cysteine 336 and cysteine 327–cysteine 403. Positions leucine 114–alanine 224 are catalytic subdomain A. The segment at proline 282 to lysine 344 is catalytic subdomain B. Asparagine 353 and asparagine 390 each carry an N-linked (GlcNAc...) asparagine glycan.

The protein belongs to the glycosyltransferase 2 family. GalNAc-T subfamily. Mn(2+) serves as cofactor. In terms of tissue distribution, expressed in testis. Mainly expressed in the round and elongated spermatids during spermiogenesis, not in the outermost cells of the seminiferous tubules, which contain spermatogonia and somatic Sertoli cells. Present in the juxtanuclear space in the round spermatids, not in the acrosomal vesicles. In the elongating spermatids, localizes strongly in the acroplaxome, the region between the developing acrosome and nucleus. During differentiation, also weakly detected in the transient manchette containing microtubules. In epididymal spermatozoa, weakly detected in the midpiece, but concentrates mainly in the neck region around the head-tail coupling apparatus (at protein level).

The protein localises to the late endosome membrane. Its function is as follows. Probable inactive glycosyltransferase required during spermatid development. May participate in protein loading into the acrosomes and accumulation of ubiquitin-proteasome systems around the head-tail coupling apparatus region. The chain is Inactive polypeptide N-acetylgalactosaminyltransferase-like protein 5 (Galntl5) from Mus musculus (Mouse).